The chain runs to 341 residues: tRNA N6-adenosine threonylcarbamoyltransferase (341 aa).

Fe cation contacts are provided by H115 and H119. Substrate-binding positions include I137–G141, D170, G183, D187, and N276. D304 provides a ligand contact to Fe cation.

This sequence belongs to the KAE1 / TsaD family. Fe(2+) is required as a cofactor.

It is found in the cytoplasm. It catalyses the reaction L-threonylcarbamoyladenylate + adenosine(37) in tRNA = N(6)-L-threonylcarbamoyladenosine(37) in tRNA + AMP + H(+). Its function is as follows. Required for the formation of a threonylcarbamoyl group on adenosine at position 37 (t(6)A37) in tRNAs that read codons beginning with adenine. Is involved in the transfer of the threonylcarbamoyl moiety of threonylcarbamoyl-AMP (TC-AMP) to the N6 group of A37, together with TsaE and TsaB. TsaD likely plays a direct catalytic role in this reaction. This Staphylococcus aureus (strain USA300) protein is tRNA N6-adenosine threonylcarbamoyltransferase.